We begin with the raw amino-acid sequence, 202 residues long: LexA repressor (202 aa).

A DNA-binding region (H-T-H motif) is located at residues 28–48; that stretch reads RAEIAQRLGFRSPNAAEEHLK. Residues Ser-119 and Lys-156 each act as for autocatalytic cleavage activity in the active site.

This sequence belongs to the peptidase S24 family. Homodimer.

The catalysed reaction is Hydrolysis of Ala-|-Gly bond in repressor LexA.. Functionally, represses a number of genes involved in the response to DNA damage (SOS response), including recA and lexA. Binds to the 16 bp palindromic sequence 5'-CTGTATATATATACAG-3'. In the presence of single-stranded DNA, RecA interacts with LexA causing an autocatalytic cleavage which disrupts the DNA-binding part of LexA, leading to derepression of the SOS regulon and eventually DNA repair. This chain is LexA repressor, found in Citrobacter koseri (strain ATCC BAA-895 / CDC 4225-83 / SGSC4696).